Consider the following 444-residue polypeptide: Spermatogenesis-associated protein 1 (444 aa).

Residues 145 to 160 (GTIHRPDSLSLSKDEP) are compositionally biased toward basic and acidic residues. The tract at residues 145 to 229 (GTIHRPDSLS…DEGEEDDKAT (85 aa)) is disordered. Positions 268 to 403 (SLLKIEREKI…RKLDTDKMKL (136 aa)) form a coiled coil.

As to quaternary structure, interacts with IFT20.

The protein localises to the cytoplasmic vesicle. It is found in the secretory vesicle. The protein resides in the acrosome. In Rattus norvegicus (Rat), this protein is Spermatogenesis-associated protein 1 (Spata1).